Here is a 272-residue protein sequence, read N- to C-terminus: Phosphonates import ATP-binding protein PhnC (272 aa).

The ABC transporter domain occupies 2–244; that stretch reads LVFDKVNRVY…IQKRLYEIEH (243 aa). 35–42 provides a ligand contact to ATP; sequence GPSGAGKS.

It belongs to the ABC transporter superfamily. Phosphonates importer (TC 3.A.1.9.1) family. As to quaternary structure, the complex is composed of two ATP-binding proteins (PhnC), two transmembrane proteins (PhnE) and a solute-binding protein (PhnD).

The protein resides in the cell inner membrane. It catalyses the reaction phosphonate(out) + ATP + H2O = phosphonate(in) + ADP + phosphate + H(+). Part of the ABC transporter complex PhnCDE involved in phosphonates import. Responsible for energy coupling to the transport system. In Hydrogenovibrio crunogenus (strain DSM 25203 / XCL-2) (Thiomicrospira crunogena), this protein is Phosphonates import ATP-binding protein PhnC.